A 604-amino-acid chain; its full sequence is uncharacterized protein (604 aa).

Residues 49–332 (LILVMLMVVI…LANQFNTMLS (284 aa)) form the ABC transmembrane type-1 domain. The next 4 helical transmembrane spans lie at 50–70 (ILVMLMVVISAIFGLLGPFVI), 86–106 (LIPVLLLLLAIYIIQSLSLWF), 172–192 (VITFVGTIAVMLYMSPLLTLI), and 288–308 (IAAIGGLFALKGWISIGSIVV). The ABC transporter domain occupies 366 to 600 (IEFRDVSFGY…KGFYSDLYES (235 aa)). 399-406 (GPTGAGKT) is a binding site for ATP. Residues 510-530 (LISIARAVLADPVLLILDEAT) traverse the membrane as a helical segment.

This sequence belongs to the ABC transporter superfamily.

It localises to the cell membrane. This is an uncharacterized protein from Bacillus subtilis (strain 168).